Consider the following 429-residue polypeptide: Histidine--tRNA ligase (429 aa).

The protein belongs to the class-II aminoacyl-tRNA synthetase family. As to quaternary structure, homodimer.

The protein resides in the cytoplasm. The catalysed reaction is tRNA(His) + L-histidine + ATP = L-histidyl-tRNA(His) + AMP + diphosphate + H(+). This chain is Histidine--tRNA ligase, found in Pseudomonas paraeruginosa (strain DSM 24068 / PA7) (Pseudomonas aeruginosa (strain PA7)).